Consider the following 266-residue polypeptide: Norfluorocurarine synthase 2 (266 aa).

One can recognise an AB hydrolase-1 domain in the interval 11–121 (HFVLVHGAGH…IMPDSTHPPI (111 aa)). Catalysis depends on residues S86, D216, and H244.

This sequence belongs to the AB hydrolase superfamily. Homodimer. In terms of tissue distribution, mainly expressed in roots.

The enzyme catalyses 17-dehydropreakuammicine + H2O = norfluorocurarine + methanol + CO2. The protein operates within alkaloid biosynthesis. Hydrolase involved in the biosynthesis of curare monoterpene indole alkaloids (MIAs), natural products such as strychnine, a neurotoxic compound used as a pesticide to control rodents, and its pharmacologically active derivatives, including brucine, used to regulate blood pressure. Curare alkaloids act as animal glycine receptor antagonists. Catalyzes the conversion of dehydropreakuammicine to norfluorocurarine. The protein is Norfluorocurarine synthase 2 of Strychnos nux-vomica (Poison nut).